The primary structure comprises 252 residues: Imidazole glycerol phosphate synthase subunit HisF (252 aa).

Active-site residues include Asp11 and Asp130.

It belongs to the HisA/HisF family. In terms of assembly, heterodimer of HisH and HisF.

The protein resides in the cytoplasm. It carries out the reaction 5-[(5-phospho-1-deoxy-D-ribulos-1-ylimino)methylamino]-1-(5-phospho-beta-D-ribosyl)imidazole-4-carboxamide + L-glutamine = D-erythro-1-(imidazol-4-yl)glycerol 3-phosphate + 5-amino-1-(5-phospho-beta-D-ribosyl)imidazole-4-carboxamide + L-glutamate + H(+). It participates in amino-acid biosynthesis; L-histidine biosynthesis; L-histidine from 5-phospho-alpha-D-ribose 1-diphosphate: step 5/9. Functionally, IGPS catalyzes the conversion of PRFAR and glutamine to IGP, AICAR and glutamate. The HisF subunit catalyzes the cyclization activity that produces IGP and AICAR from PRFAR using the ammonia provided by the HisH subunit. The chain is Imidazole glycerol phosphate synthase subunit HisF from Staphylococcus saprophyticus subsp. saprophyticus (strain ATCC 15305 / DSM 20229 / NCIMB 8711 / NCTC 7292 / S-41).